Consider the following 281-residue polypeptide: Ribosomal protein L11 methyltransferase (281 aa).

Residues Thr-131, Gly-152, Asp-174, and Asn-217 each coordinate S-adenosyl-L-methionine.

This sequence belongs to the methyltransferase superfamily. PrmA family.

The protein localises to the cytoplasm. It carries out the reaction L-lysyl-[protein] + 3 S-adenosyl-L-methionine = N(6),N(6),N(6)-trimethyl-L-lysyl-[protein] + 3 S-adenosyl-L-homocysteine + 3 H(+). Functionally, methylates ribosomal protein L11. The chain is Ribosomal protein L11 methyltransferase from Phocaeicola vulgatus (strain ATCC 8482 / DSM 1447 / JCM 5826 / CCUG 4940 / NBRC 14291 / NCTC 11154) (Bacteroides vulgatus).